The chain runs to 3021 residues: Genome polyprotein (3021 aa).

Serine 2 carries the post-translational modification N-acetylserine; by host. An interaction with STAT1 region spans residues 2-23 (STLPKPQRKTKRNTIRRPQDVK). Residues 2–58 (STLPKPQRKTKRNTIRRPQDVKFPGGGVIYVGVYVLPRRGPRLGVRATRKTSERSQP) form an interaction with EIF2AK2/PKR region. Residues 2 to 59 (STLPKPQRKTKRNTIRRPQDVKFPGGGVIYVGVYVLPRRGPRLGVRATRKTSERSQPR) form an interaction with DDX3X region. Residues 2-75 (STLPKPQRKT…PKARRSEGRS (74 aa)) are disordered. Topologically, residues 2-168 (STLPKPQRKT…EDGINFATGN (167 aa)) are cytoplasmic. 2 consecutive short sequence motifs (nuclear localization signal) follow at residues 5–13 (PKPQRKTKR) and 38–43 (PRRGPR). The segment covering 7 to 16 (PQRKTKRNTI) has biased composition (basic residues). At serine 53 the chain carries Phosphoserine; by host. 2 consecutive short sequence motifs (nuclear localization signal) follow at residues 58–64 (PRGRRKP) and 66–71 (PKARRS). Residues 58 to 68 (PRGRRKPIPKA) are compositionally biased toward basic residues. Phosphoserine; by host occurs at positions 99 and 116. The tract at residues 112 to 152 (PRRRSRNLGKVIDTLTCGFADLMGYIPLVGAPLGGAARALA) is important for endoplasmic reticulum and mitochondrial localization. The interaction with APOA2 stretch occupies residues 122-173 (VIDTLTCGFADLMGYIPLVGAPLGGAARALAHGVRALEDGINFATGNLPGCS). Positions 164–167 (FATG) are important for lipid droplets localization. Residues 169 to 189 (LPGCSFSIFLLALFSCLIHPA) form a helical membrane-spanning segment. Positions 178–191 (LLALFSCLIHPAAS) are cleaved as a propeptide — ER anchor for the core protein, removed in mature form by host signal peptidase. At 190-358 (ASLEWRNTSG…AGAHWGIIAG (169 aa)) the chain is on the lumenal side. Asparagine 196, asparagine 209, and asparagine 234 each carry an N-linked (GlcNAc...) asparagine; by host glycan. An important for fusion region spans residues 265 to 296 (LVGAGTMCSALYVGDMCGPVFLVGQAFTFRPR). Asparagine 305 carries an N-linked (GlcNAc...) asparagine; by host glycan. Residues 359–379 (LAYYSMQGNWAKVAIIMVMFS) form a helical membrane-spanning segment. At 380 to 731 (GVDASTHVTA…WEFVILIFLL (352 aa)) the chain is on the lumenal side. The HVR1 stretch occupies residues 385–412 (THVTAGQAARNAYGITSLFSVGAKQNLQ). N-linked (GlcNAc...) (high mannose) asparagine; by host glycans are attached at residues asparagine 417, asparagine 423, and asparagine 430. 4 disulfide bridges follow: cysteine 429–cysteine 553, cysteine 452–cysteine 459, cysteine 487–cysteine 495, and cysteine 504–cysteine 509. Residue asparagine 448 is glycosylated (N-linked (GlcNAc...) asparagine; by host). The interval 475-479 (ANITG) is HVR2. N-linked (GlcNAc...) asparagine; by host glycosylation occurs at asparagine 476. The CD81-binding 1 stretch occupies residues 481 to 494 (SDDKPYCWHYAPRP). Asparagine 533 carries an N-linked (GlcNAc...) asparagine; by host glycan. The segment at 545–552 (PPSGRWFG) is CD81-binding 2. Asparagine 557 carries N-linked (GlcNAc...) asparagine; by host glycosylation. Intrachain disulfides connect cysteine 565/cysteine 570, cysteine 587/cysteine 591, cysteine 603/cysteine 626, and cysteine 613/cysteine 650. Residues asparagine 629 and asparagine 651 are each glycosylated (N-linked (GlcNAc...) (high mannose) asparagine; by host). A disulfide bridge connects residues cysteine 658 and cysteine 683. The interval 666–677 (SEQHPLLHSTTE) is PKR/eIF2-alpha phosphorylation homology domain (PePHD). Residues 732–752 (LADARVCVALWLILTISQAEA) form a helical membrane-spanning segment. At 753-763 (ALENLVTLNAV) the chain is on the lumenal side. Residues 764–784 (AAAGTHGIGWYLVAFCAAWYV) traverse the membrane as a helical segment. At 785–787 (RGK) the chain is on the cytoplasmic side. The helical transmembrane segment at 788–809 (LVPLVTYSLTGLWSLALLVLLL) threads the bilayer. Over 810–819 (PQRAYAWSGE) the chain is Lumenal. A helical membrane pass occupies residues 820 to 840 (DSATLGAGILVLFGFFTLSPW). Residues 841–844 (YKHW) are Cytoplasmic-facing. Residues 845–864 (IARLIWWNQYTICRCESALH) form a helical membrane-spanning segment. The Lumenal segment spans residues 865–887 (VWVPPLLARGGRDGVILLTSLLY). A helical transmembrane segment spans residues 888–908 (PSLIFDITKLLIAALGPLYLI). A Peptidase C18 domain is found at 905–1032 (LYLIQATITA…DYREMGWRLL (128 aa)). At 909-1663 (QATITATPYF…CMSADLEVTT (755 aa)) the chain is on the cytoplasmic side. Positions 910 to 1212 (ATITATPYFV…PVETLSTQAR (303 aa)) are protease NS2-3. Cysteine 928 is lipidated: S-palmitoyl cysteine; by host. Residues 935–955 (MGGKYFQMIILSLADGSNTYL) are interaction with host SCPS1. Active-site for protease NS2 activity; shared with dimeric partner residues include histidine 958, glutamate 978, and cysteine 999. A Peptidase S29 domain is found at 1033 to 1214 (APITAYAQQT…ETLSTQARSP (182 aa)). Catalysis depends on charge relay system; for serine protease NS3 activity residues histidine 1089 and aspartate 1113. Cysteine 1129 and cysteine 1131 together coordinate Zn(2+). Serine 1171 acts as the Charge relay system; for serine protease NS3 activity in catalysis. Cysteine 1177 and histidine 1181 together coordinate Zn(2+). Positions 1223–1375 (PAVPQSYQVG…SNIEEVALGS (153 aa)) constitute a Helicase ATP-binding domain. 1236 to 1243 (APTGSGKS) lines the ATP pocket. Serine 1243 is a Mg(2+) binding site. The DECH box signature appears at 1322 to 1325 (DDCH). Positions 1382–1544 (YGKAIPIACI…DLQPAETTVR (163 aa)) constitute a Helicase C-terminal domain. Positions 1492 to 1504 (QRRGRTGRGRLGT) are RNA-binding. The chain crosses the membrane as a helical span at residues 1664-1684 (STWVLLGGVLAAVAAYCLSVG). The interval 1685–1696 (CVVIVGHIELGG) is NS3-binding. Over 1685–1811 (CVVIVGHIEL…SVTSPLTTNQ (127 aa)) the chain is Cytoplasmic. The chain crosses the membrane as a helical span at residues 1812 to 1830 (TMFFNILGGWVATHLAGPQ). Residues 1831–1834 (ASSA) lie on the Lumenal side of the membrane. The chain crosses the membrane as a helical span at residues 1835–1855 (FVVSGLAGAAIGGIGLGRVLL). Residue aspartate 1856 is a topological domain, cytoplasmic. Residues 1857–1877 (ILAGYGAGVSGALVAFKIMGG) form a helical membrane-spanning segment. The Lumenal portion of the chain corresponds to 1878-1887 (EPPTTEDMVN). Residues 1888–1908 (LLPAILSPGALVVGVICAAIL) traverse the membrane as a helical segment. The Cytoplasmic segment spans residues 1909 to 1978 (RRHVGPGEGP…WINEDYPSPC (70 aa)). Cysteine 1978 is lipidated: S-palmitoyl cysteine; by host. The stretch at 1979–2008 (SGDWLRIIWDWVCSVVSDFKTWLSAKIMPA) is an intramembrane region. Residues 2009–3000 (LPGLPFISCQ…YHSVSRARTR (992 aa)) lie on the Cytoplasmic side of the membrane. Zn(2+)-binding residues include cysteine 2017, cysteine 2035, cysteine 2037, and cysteine 2058. The segment at 2126-2214 (EFFTEVDGVR…ASSSASQLSA (89 aa)) is FKBP8-binding. Residues 2126–2338 (EFFTEVDGVR…PVPPPRRKRT (213 aa)) form a transcriptional activation region. The segment at 2141–2145 (PPCRP) is interaction with non-structural protein 4A. The interval 2193-2215 (ARRLARGSPPSEASSSASQLSAP) is disordered. An interaction with host SKP2 region spans residues 2195–2448 (RLARGSPPSE…ALITPCSAEE (254 aa)). Residues serine 2200, serine 2203, serine 2207, serine 2210, serine 2213, and serine 2216 each carry the phosphoserine; by host modification. A compositionally biased stretch (low complexity) spans 2200–2215 (SPPSEASSSASQLSAP). The ISDR stretch occupies residues 2216–2255 (SLKATCQTHRPHPDAELVDANLLWRQEMGSNITRVESETK). The interaction with EIF2AK2/PKR stretch occupies residues 2216-2281 (SLKATCQTHR…AELSAAAECF (66 aa)). The tract at residues 2255 to 2312 (KVVILDSFEPLRAETDDAELSAAAECFKKPPKYPPALPIWARPDYNPPLLDRWKSPDY) is NS4B-binding. Residues 2305 to 2383 (DRWKSPDYVP…DTQSSTASKV (79 aa)) are V3. 2 disordered regions span residues 2318 to 2338 (HGCA…RKRT) and 2356 to 2419 (KSFP…WSTV). Residues 2328-2331 (PPVP) carry the SH3-binding motif. The Nuclear localization signal motif lies at 2333–2341 (PRRKRTIQL). Lysine 2356 participates in a covalent cross-link: Glycyl lysine isopeptide (Lys-Gly) (interchain with G-Cter in ubiquitin). Low complexity predominate over residues 2359 to 2381 (PSSKPQEENSSSSGVDTQSSTAS). A phosphoserine; by host mark is found at serine 2459 and serine 2472. Positions 2644-2762 (PLGFSYDTRC…VAESDGVDED (119 aa)) constitute a RdRp catalytic domain. Residues aspartate 2650, aspartate 2748, and aspartate 2749 each contribute to the Mg(2+) site. A helical transmembrane segment spans residues 3001–3021 (YLLLCLLLLTVGVGIFLLPAR).

The protein belongs to the hepacivirus polyprotein family. Homooligomer. Interacts with E1 (via C-terminus). Interacts with the non-structural protein 5A. Interacts (via N-terminus) with host STAT1 (via SH2 domain); this interaction results in decreased STAT1 phosphorylation and ubiquitin-mediated proteasome-dependent STAT1 degradation, leading to decreased IFN-stimulated gene transcription. Interacts with host STAT3; this interaction constitutively activates STAT3. Interacts with host LTBR receptor. Interacts with host TNFRSF1A receptor and possibly induces apoptosis. Interacts with host HNRPK. Interacts with host YWHAE. Interacts with host UBE3A/E6AP. Interacts with host DDX3X. Interacts with host APOA2. Interacts with host RXRA protein. Interacts with host SP110 isoform 3/Sp110b; this interaction sequesters the transcriptional corepressor SP110 away from the nucleus. Interacts with host CREB3 nuclear transcription protein; this interaction triggers cell transformation. Interacts with host ACY3. Interacts with host C1QR1. Interacts with host RBM24; this interaction, which enhances the interaction of the mature core protein with 5'-UTR, may inhibit viral translation and favor replication. Interacts with host EIF2AK2/PKR; this interaction induces the autophosphorylation of EIF2AK2. Part of the viral assembly initiation complex composed of NS2, E1, E2, NS3, NS4A, NS5A and the mature core protein. In terms of assembly, forms a heterodimer with envelope glycoprotein E2. Interacts with mature core protein. Interacts with protease NS2. The heterodimer E1/E2 interacts with host CLDN1; this interaction plays a role in viral entry into host cell. Interacts with host SPSB2 (via C-terminus). Part of the viral assembly initiation complex composed of NS2, E1, E2, NS3, NS4A, NS5A and the mature core protein. Interacts with host NEURL3; this interaction prevents E1 binding to glycoprotein E2. As to quaternary structure, forms a heterodimer with envelope glycoprotein E1. Interacts with host CD81 and SCARB1 receptors; these interactions play a role in viral entry into host cell. Interacts with host EIF2AK2/PKR; this interaction inhibits EIF2AK2 and probably allows the virus to evade the innate immune response. Interacts with host CD209/DC-SIGN and CLEC4M/DC-SIGNR. Interact with host SPCS1; this interaction is essential for viral particle assembly. Interacts with protease NS2. The heterodimer E1/E2 interacts with host CLDN1; this interaction plays a role in viral entry into host cell. Part of the viral assembly initiation complex composed of NS2, E1, E2, NS3, NS4A, NS5A and the mature core protein. Interacts with host SLC3A2/4F2hc; the interaction may facilitate viral entry into host cell. Interacts with human PLSCR1. Homohexamer. Homoheptamer. Interacts with protease NS2. In terms of assembly, homodimer. Interacts with host SPCS1; this interaction is essential for viral particle assembly. Interacts with envelope glycoprotein E1. Interacts with envelope glycoprotein E2. Interacts with viroporin p7. Interacts with serine protease/helicase NS3. Part of the replication complex composed of NS2, NS3, NS4A, NS4B, NS5A and the RNA-directed RNA polymerase embedded in an ER-derived membranous web. Part of the viral assembly initiation complex composed of NS2, E1, E2, NS3, NS4A, NS5A and the mature core protein. As to quaternary structure, interacts with protease NS2. Interacts with non-structural protein 4A; this interaction stabilizes the folding of NS3 serine protease. NS3-NS4A interaction is essential for NS3 activation and allows membrane anchorage of the latter. NS3/NS4A complex also prevents phosphorylation of host IRF3, thus preventing the establishment of dsRNA induced antiviral state. Interacts with host MAVS; this interaction leads to the cleavage and inhibition of host MAVS. Interacts with host TICAM1; this interaction leads to the cleavage and inhibition of host TICAM1. Interacts with host TANK-binding kinase/TBK1; this interaction results in the inhibition of the association between TBK1 and IRF3, which leads to the inhibition of IRF3 activation. Interacts with host RBM24. Part of the replication complex composed of NS2, NS3, NS4A, NS4B, NS5A and the RNA-directed RNA polymerase embedded in an ER-derived membranous web. Part of the viral assembly initiation complex composed of NS2, E1, E2, NS3, NS4A, NS5A and the mature core protein. Interacts with NS3 serine protease; this interaction stabilizes the folding of NS3 serine protease. NS3-NS4A interaction is essential for NS3 activation and allows membrane anchorage of the latter. Interacts with non-structural protein 5A (via N-terminus). Part of the replication complex composed of NS2, NS3, NS4A, NS4B, NS5A and the RNA-directed RNA polymerase embedded in an ER-derived membranous web. Part of the viral assembly initiation complex composed of NS2, E1, E2, NS3, NS4A, NS5A and the mature core protein. In terms of assembly, homomultimer. Interacts with non-structural protein NS5A. Interacts with host PLA2G4C; this interaction likely initiates the recruitment of replication complexes to lipid droplets. Interacts with host STING; this interaction disrupts the interaction between STING and TBK1 thereby suppressing the interferon signaling. Part of the replication complex composed of NS2, NS3, NS4A, NS4B, NS5A and the RNA-directed RNA polymerase embedded in an ER-derived membranous web. As to quaternary structure, monomer. Homodimer; dimerization is required for RNA-binding. Interacts with the mature core protein. Interacts (via N-terminus) with non-structural protein 4A. Interacts with non-structural protein 4B. Interacts (via region D2) with RNA-directed RNA polymerase. Part of the viral assembly initiation complex composed of NS2, E1, E2, NS3, NS4A, NS5A and the mature core protein. Part of the replication complex composed of NS2, NS3, NS4A, NS4B, NS5A and the RNA-directed RNA polymerase embedded in an ER-derived membranous web. Interacts with host GRB2. Interacts with host BIN1. Interacts with host PIK3R1. Interacts with host SRCAP. Interacts with host FKBP8. Interacts (via C-terminus) with host VAPB (via MSP domain). Interacts with host EIF2AK2/PKR; this interaction leads to disruption of EIF2AK2 dimerization by NS5A and probably allows the virus to evade the innate immune response. Interacts (via N-terminus) with host PACSIN2 (via N-terminus); this interaction attenuates protein kinase C alpha-mediated phosphorylation of PACSIN2 by disrupting the interaction between PACSIN2 and PRKCA. Interacts (via N-terminus) with host SRC kinase (via SH2 domain). Interacts with most Src-family kinases. Interacts with host IFI27 and SKP2; promotes the ubiquitin-mediated proteasomal degradation of NS5A. Interacts with host GPS2. Interacts with host TNFRSF21; this interaction allows the modulation by the virus of JNK, p38 MAPK, STAT3, and Akt signaling pathways in a DR6-dependent manner. Interacts (via N-terminus) with host CIDEB (via N-terminus); this interaction seems to regulate the association of HCV particles with APOE. Interacts with host CHKA/Choline Kinase-alpha; CHKA bridges host PI4KA and NS5A and potentiates NS5A-stimulated PI4KA activity, which then facilitates the targeting of the ternary complex to the ER for viral replication. Interacts with host SPSB2 (via C-terminus); this interaction targets NS5A for ubiquitination and degradation. Interacts with host RAB18; this interaction may promote the association of NS5A and other replicase components with lipid droplets. Interacts (via region D2) with host PPIA/CYPA; the interaction stimulates RNA-binding ability of NS5A and is dependent on the peptidyl-prolyl cis-trans isomerase activity of PPIA/CYPA. Interacts with host TRIM14; this interaction induces the degradation of NS5A. Homooligomer. Interacts with non-structural protein 5A. Interacts with host VAPB. Interacts with host PRK2/PKN2. Interacts with host HNRNPA1 and SEPT6; these interactions facilitate viral replication. Part of the replication complex composed of NS2, NS3, NS4A, NS4B, NS5A and the RNA-directed RNA polymerase. Zn(2+) is required as a cofactor. Requires Mg(2+) as cofactor. Specific enzymatic cleavages in vivo yield mature proteins. The structural proteins, core, E1, E2 and p7 are produced by proteolytic processing by host signal peptidases. The core protein precursor is synthesized as a 23 kDa, which is retained in the ER membrane through the hydrophobic signal peptide. Cleavage by the signal peptidase releases the 21 kDa mature core protein. The cleavage of the core protein precursor occurs between aminoacids 176 and 188 but the exact cleavage site is not known. Some degraded forms of the core protein appear as well during the course of infection. The other proteins (p7, NS2, NS3, NS4A, NS4B, NS5A and NS5B) are cleaved by the viral proteases. Autoprocessing between NS2 and NS3 is mediated by the NS2 cysteine protease catalytic domain and regulated by the NS3 N-terminal domain. In terms of processing, phosphorylated by host PKC and PKA. Post-translationally, ubiquitinated; mediated by UBE3A and leading to core protein subsequent proteasomal degradation. Highly N-glycosylated. In terms of processing, palmitoylation is required for NS2/3 autoprocessing and E2 recruitment to membranes. Post-translationally, palmitoylated. This modification may play a role in its polymerization or in protein-protein interactions. Phosphorylated on serines in a basal form termed p56. p58 is a hyperphosphorylated form of p56. p56 and p58 coexist in the cell in roughly equivalent amounts. Hyperphosphorylation is dependent on the presence of NS4A. Host CSNK1A1/CKI-alpha or RPS6KB1 kinases may be responsible for NS5A phosphorylation. In terms of processing, tyrosine phosphorylation is essential for the interaction with host SRC. Post-translationally, ubiquitinated. Ubiquitination, most probably at Lys-2356, mediated by host IFI27 and SKP2 leads to proteasomal degradation, restricting viral infection. Ubiquitination by host TRIM22 leads to interruption of viral replication. The N-terminus is phosphorylated by host PRK2/PKN2.

It localises to the host endoplasmic reticulum membrane. It is found in the host mitochondrion membrane. Its subcellular location is the virion. The protein resides in the host cytoplasm. The protein localises to the host nucleus. It localises to the host lipid droplet. It is found in the virion membrane. Its subcellular location is the host mitochondrion. The protein resides in the host cell membrane. The protein localises to the host perinuclear region. It catalyses the reaction Hydrolysis of four peptide bonds in the viral precursor polyprotein, commonly with Asp or Glu in the P6 position, Cys or Thr in P1 and Ser or Ala in P1'.. The enzyme catalyses a ribonucleoside 5'-triphosphate + H2O = a ribonucleoside 5'-diphosphate + phosphate + H(+). The catalysed reaction is ATP + H2O = ADP + phosphate + H(+). It carries out the reaction RNA(n) + a ribonucleoside 5'-triphosphate = RNA(n+1) + diphosphate. Its activity is regulated as follows. Inhibited by the antiviral drug hexamethylene amiloride. Inhibition by amantadine appears to be genotype-dependent. Also inhibited by long-alkyl-chain iminosugar derivatives. Activity is up-regulated by PRK2/PKN2-mediated phosphorylation. Packages viral RNA to form a viral nucleocapsid, and promotes virion budding. Participates in the viral particle production as a result of its interaction with the non-structural protein 5A. Binds RNA and may function as a RNA chaperone to induce the RNA structural rearrangements taking place during virus replication. Modulates viral translation initiation by interacting with viral IRES and 40S ribosomal subunit. Affects various cell signaling pathways, host immunity and lipid metabolism. Prevents the establishment of cellular antiviral state by blocking the interferon-alpha/beta (IFN-alpha/beta) and IFN-gamma signaling pathways and by blocking the formation of phosphorylated STAT1 and promoting ubiquitin-mediated proteasome-dependent degradation of STAT1. Activates STAT3 leading to cellular transformation. Regulates the activity of cellular genes, including c-myc and c-fos. May repress the promoter of p53, and sequester CREB3 and SP110 isoform 3/Sp110b in the cytoplasm. Represses cell cycle negative regulating factor CDKN1A, thereby interrupting an important check point of normal cell cycle regulation. Targets transcription factors involved in the regulation of inflammatory responses and in the immune response: suppresses TNF-induced NF-kappa-B activation, and activates AP-1. Binds to dendritic cells (DCs) via C1QR1, resulting in down-regulation of T-lymphocytes proliferation. Alters lipid metabolism by interacting with hepatocellular proteins involved in lipid accumulation and storage. Induces up-regulation of FAS promoter activity, and thereby contributes to the increased triglyceride accumulation in hepatocytes (steatosis). In terms of biological role, forms a heterodimer with envelope glycoprotein E2, which mediates virus attachment to the host cell, virion internalization through clathrin-dependent endocytosis and fusion with host membrane. Fusion with the host cell is most likely mediated by both E1 and E2, through conformational rearrangements of the heterodimer required for fusion rather than a classical class II fusion mechanism. E1/E2 heterodimer binds host apolipoproteins such as APOB and ApoE thereby forming a lipo-viro-particle (LVP). APOE associated to the LVP allows the initial virus attachment to cell surface receptors such as the heparan sulfate proteoglycans (HSPGs), syndecan-1 (SDC1), syndecan-1 (SDC2), the low-density lipoprotein receptor (LDLR) and scavenger receptor class B type I (SCARB1). The cholesterol transfer activity of SCARB1 allows E2 exposure and binding of E2 to SCARB1 and the tetraspanin CD81. E1/E2 heterodimer binding on CD81 activates the epithelial growth factor receptor (EGFR) signaling pathway. Diffusion of the complex E1-E2-EGFR-SCARB1-CD81 to the cell lateral membrane allows further interaction with Claudin 1 (CLDN1) and occludin (OCLN) to finally trigger HCV entry. Its function is as follows. Forms a heterodimer with envelope glycoprotein E1, which mediates virus attachment to the host cell, virion internalization through clathrin-dependent endocytosis and fusion with host membrane. Fusion with the host cell is most likely mediated by both E1 and E2, through conformational rearrangements of the heterodimer required for fusion rather than a classical class II fusion mechanism. The interaction between envelope glycoprotein E2 and host apolipoprotein E/APOE allows the proper assembly, maturation and infectivity of the viral particles. This interaction is probably promoted via the up-regulation of cellular autophagy by the virus. E1/E2 heterodimer binds host apolipoproteins such as APOB and APOE thereby forming a lipo-viro-particle (LVP). APOE associated to the LVP allows the initial virus attachment to cell surface receptors such as the heparan sulfate proteoglycans (HSPGs), syndecan-1 (SDC1), syndecan-1 (SDC2), the low-density lipoprotein receptor (LDLR) and scavenger receptor class B type I (SCARB1). The cholesterol transfer activity of SCARB1 allows E2 exposure and binding of E2 to SCARB1 and the tetraspanin CD81. E1/E2 heterodimer binding on CD81 activates the epithelial growth factor receptor (EGFR) signaling pathway. Diffusion of the complex E1-E2-EGFR-SCARB1-CD81 to the cell lateral membrane allows further interaction with Claudin 1 (CLDN1) and occludin (OCLN) to finally trigger HCV entry. Inhibits host EIF2AK2/PKR activation, preventing the establishment of an antiviral state. Viral ligand for CD209/DC-SIGN and CLEC4M/DC-SIGNR, which are respectively found on dendritic cells (DCs), and on liver sinusoidal endothelial cells and macrophage-like cells of lymph node sinuses. These interactions allow the capture of circulating HCV particles by these cells and subsequent facilitated transmission to permissive cells such as hepatocytes and lymphocyte subpopulations. The interaction between E2 and host amino acid transporter complex formed by SLC3A2 and SLC7A5/LAT1 may facilitate viral entry into host cell. Functionally, ion channel protein that acts as a viroporin and plays an essential role in the assembly, envelopment and secretion of viral particles. Regulates the host cell secretory pathway, which induces the intracellular retention of viral glycoproteins and favors assembly of viral particles. Creates a pore in acidic organelles and releases Ca(2+) and H(+) in the cytoplasm of infected cells, leading to a productive viral infection. High levels of cytoplasmic Ca(2+) may trigger membrane trafficking and transport of viral ER-associated proteins to viroplasms, sites of viral genome replication. This ionic imbalance induces the assembly of the inflammasome complex, which triggers the maturation of pro-IL-1beta into IL-1beta through the action of caspase-1. Targets also host mitochondria and induces mitochondrial depolarization. In addition of its role as a viroporin, acts as a lipid raft adhesion factor. Cysteine protease required for the proteolytic auto-cleavage between the non-structural proteins NS2 and NS3. The N-terminus of NS3 is required for the function of NS2 protease (active region NS2-3). Promotes the initiation of viral particle assembly by mediating the interaction between structural and non-structural proteins. In terms of biological role, displays three enzymatic activities: serine protease with a chymotrypsin-like fold, NTPase and RNA helicase. NS3 serine protease, in association with NS4A, is responsible for the cleavages of NS3-NS4A, NS4A-NS4B, NS4B-NS5A and NS5A-NS5B. The NS3/NS4A complex prevents phosphorylation of host IRF3, thus preventing the establishment of dsRNA induced antiviral state. The NS3/NS4A complex induces host amino acid transporter component SLC3A2, thus contributing to HCV propagation. NS3 RNA helicase binds to RNA and unwinds both dsDNA and dsRNA in the 3' to 5' direction, and likely resolves RNA complicated stable secondary structures in the template strand. Binds a single ATP and catalyzes the unzipping of a single base pair of dsRNA. Inhibits host antiviral proteins TBK1 and IRF3 thereby preventing the establishment of an antiviral state. Cleaves host MAVS/CARDIF thereby preventing the establishment of an antiviral state. Cleaves host TICAM1/TRIF, thereby disrupting TLR3 signaling and preventing the establishment of an antiviral state. Its function is as follows. Peptide cofactor which forms a non-covalent complex with the N-terminal of NS3 serine protease. The NS3/NS4A complex prevents phosphorylation of host IRF3, thus preventing the establishment of dsRNA induced antiviral state. The NS3/NS4A complex induces host amino acid transporter component SLC3A2, thus contributing to HCV propagation. Functionally, induces a specific membrane alteration that serves as a scaffold for the virus replication complex. This membrane alteration gives rise to the so-called ER-derived membranous web that contains the replication complex. NS4B self-interaction contributes to its function in membranous web formation. Promotes host TRIF protein degradation in a CASP8-dependent manner thereby inhibiting host TLR3-mediated interferon signaling. Disrupts the interaction between STING and TBK1 contributing to the inhibition of interferon signaling. Phosphorylated protein that is indispensable for viral replication and assembly. Both hypo- and hyperphosphorylated states are required for the viral life cycle. The hyperphosphorylated form of NS5A is an inhibitor of viral replication. Involved in RNA-binding and especially in binding to the viral genome. Zinc is essential for RNA-binding. Participates in the viral particle production as a result of its interaction with the mature viral core protein. Its interaction with host VAPB may target the viral replication complex to vesicles. Down-regulates viral IRES translation initiation. Mediates interferon resistance, presumably by interacting with and inhibiting host EIF2AK2/PKR. Prevents BIN1-induced apoptosis. Acts as a transcriptional activator of some host genes important for viral replication when localized in the nucleus. Via the interaction with host PACSIN2, modulates lipid droplet formation in order to promote virion assembly. Modulates TNFRSF21/DR6 signaling pathway for viral propagation. In terms of biological role, RNA-dependent RNA polymerase that performs primer-template recognition and RNA synthesis during viral replication. Initiates RNA transcription/replication at a flavin adenine dinucleotide (FAD), resulting in a 5'- FAD cap on viral RNAs. In this way, recognition of viral 5' RNA by host pattern recognition receptors can be bypassed, thereby evading activation of antiviral pathways. In Homo sapiens (Human), this protein is Genome polyprotein.